Reading from the N-terminus, the 802-residue chain is Copper-exporting P-type ATPase (802 aa).

HMA domains lie at 5–70 (KKTT…YGVA) and 72–138 (ETVE…YDAS). Residues Cys16, Cys19, Cys83, and Cys86 each coordinate Cu(+). Helical transmembrane passes span 161–181 (LIISAVLSLPLLMLMFVHLFN), 192–212 (WFQFILATPVQFIIGWQFYVG), 224–244 (MDVLVAVGTSAAYFYSIYEMV), 256–276 (LYFETSAVLITLILFGKYLEA), 411–431 (YFVPIVVGIALLTFIVWITLV), and 438–458 (PALVASISVLVIACPCALGLA). Asp495 (4-aspartylphosphate intermediate) is an active-site residue. Mg(2+)-binding residues include Asp690 and Asp694. 2 consecutive transmembrane segments (helical) span residues 748 to 767 (LFWAFGYNIAGIPIAALGLL) and 771 to 790 (VAGAAMALSSVSVVTNALRL).

The protein belongs to the cation transport ATPase (P-type) (TC 3.A.3) family. Type IB subfamily.

The protein localises to the cell membrane. The catalysed reaction is Cu(+)(in) + ATP + H2O = Cu(+)(out) + ADP + phosphate + H(+). In terms of biological role, involved in copper export. This is Copper-exporting P-type ATPase (copA) from Staphylococcus aureus (strain USA300 / TCH1516).